Consider the following 151-residue polypeptide: 3-hydroxyacyl-[acyl-carrier-protein] dehydratase FabZ (151 aa).

H54 is a catalytic residue.

It belongs to the thioester dehydratase family. FabZ subfamily.

Its subcellular location is the cytoplasm. The catalysed reaction is a (3R)-hydroxyacyl-[ACP] = a (2E)-enoyl-[ACP] + H2O. In terms of biological role, involved in unsaturated fatty acids biosynthesis. Catalyzes the dehydration of short chain beta-hydroxyacyl-ACPs and long chain saturated and unsaturated beta-hydroxyacyl-ACPs. This Klebsiella pneumoniae (strain 342) protein is 3-hydroxyacyl-[acyl-carrier-protein] dehydratase FabZ.